The following is a 1255-amino-acid chain: Structural polyprotein (1255 aa).

The necessary for nucleocapsid assembly and virus assembly stretch occupies residues 1–33 (MFPFQPMYPMQPMPYRNPFAAPRRPWFPRTDPF). The host transcription inhibition stretch occupies residues 33 to 68 (FLAMQVQELTRSMANLTFKQRREAPPEGPPAKKPKR). The short motif at 41–48 (LTRSMANL) is the Supraphysiological nuclear export signal element. Residues 44 to 119 (SMANLTFKQR…KKPGKRQRMV (76 aa)) form a disordered region. A glycan (N-linked (GlcNAc...) asparagine; by host) is linked at N47. Positions 64-68 (KKPKR) match the Nuclear localization signal motif. The span at 80–92 (GKKKKNQGKKKAK) shows a compositional bias: basic residues. The tract at residues 91 to 127 (AKTGPPNPKAQNGNKKKTNKKPGKRQRMVMKLESDKT) is binding to the viral RNA. Phosphothreonine occurs at positions 93 and 108. Residues 104–118 (NKKKTNKKPGKRQRM) show a composition bias toward basic residues. A ribosome-binding region spans residues 112-126 (PGKRQRMVMKLESDK). Position 124 is a phosphoserine (S124). Residues 126–275 (KTFPIMLEGK…KYTPENCEQW (150 aa)) form the Peptidase S3 domain. T127 carries the post-translational modification Phosphothreonine. Residue H152 is the Charge relay system of the active site. The tract at residues 168–173 (KKASKY) is interaction with spike glycoprotein E2. Active-site charge relay system residues include D174 and S226. Positions 260–264 (EKGVT) are interaction with spike glycoprotein E2. The tract at residues 276-287 (SLVTTMCLLANV) is functions as an uncleaved signal peptide for the precursor of protein E3/E2. The Extracellular segment spans residues 276 to 701 (SLVTTMCLLA…HYYHRYPMST (426 aa)). 7 cysteine pairs are disulfide-bonded: C282-C291, C353-C457, C356-C361, C424-C438, C485-C600, C534-C560, and C536-C554. The N-linked (GlcNAc...) asparagine; by host glycan is linked to N286. N652 carries N-linked (GlcNAc...) asparagine; by host glycosylation. Residues 702 to 722 (ILGLSICAAIVTVSIAASTWL) form a helical membrane-spanning segment. The Cytoplasmic portion of the chain corresponds to 723-757 (LCKSRVSCLTPYRLTPNARMPLCLAVLCCARTARA). Residues 725–729 (KSRVS) form an interaction with the capsid protein region. S-palmitoyl cysteine; by host attachment occurs at residues C730, C750, and C751. Residues 730 to 750 (CLTPYRLTPNARMPLCLAVLC) form a transient transmembrane before p62-6K protein processing region. The cysteines at positions 730 and 751 are disulfide-linked. The Extracellular segment spans residues 758–772 (ETTWESLDHLWNNNQ). Residues 773–793 (QMFWIQLLIPLAALIVVTRLL) traverse the membrane as a helical segment. A topological domain (cytoplasmic) is located at residue R794. Residues 795–815 (CVCCVVPFLVVAGAAGAGAYE) traverse the membrane as a helical segment. Over 816–1225 (HATTMPSQAG…SKTAWTWLTS (410 aa)) the chain is Extracellular. 4 cysteine pairs are disulfide-bonded: C862/C927, C875/C907, C876/C909, and C881/C891. The E1 fusion peptide loop stretch occupies residues 897 to 914 (VYPFMWGGAYCFCDTENT). 2 N-linked (GlcNAc...) asparagine; by host glycosylation sites follow: N947 and N1083. Intrachain disulfides connect C1072-C1084, C1114-C1189, C1119-C1193, and C1141-C1183. A helical transmembrane segment spans residues 1226–1246 (LLGGSAVIIIIGLVLATIVAM). The Cytoplasmic portion of the chain corresponds to 1247-1255 (YVLTNQKHN).

Homodimer. Homomultimer. Interacts with host karyopherin KPNA4; this interaction allows the nuclear import of the viral capsid protein. Interacts with spike glycoprotein E2. Interacts with host IRAK1; the interaction leads to inhibition of IRAK1-dependent signaling. Part of a tetrameric complex composed of host CRM1, host importin alpha/beta dimer and the viral capsid; this complex blocks the receptor-mediated transport through the nuclear pore. Interacts with host phosphatase PPP1CA; this interaction dephosphorylates the capsid protein, which increases its ability to bind to the viral genome. In terms of assembly, the precursor of protein E3/E2 and E1 form a heterodimer shortly after synthesis. As to quaternary structure, interacts with spike glycoprotein E2. The precursor of protein E3/E2 and E1 form a heterodimer shortly after synthesis. Processing of the precursor of protein E3/E2 into E2 and E3 results in a heterodimer of the spike glycoproteins E2 and E1. Spike at virion surface are constituted of three E2-E1 heterodimers. After target cell attachment and endocytosis, E1 change conformation to form homotrimers. Interacts with 6K protein. Interacts with host LDLRAD3; this interaction mediates viral entry to the host cell. Interacts with spike glycoprotein E1. Processing of the precursor of protein E3/E2 into E2 and E3 results in a heterodimer of the spike glycoproteins E2 and E1. Spike at virion surface are constituted of a trimer of E2-E1 heterodimers. Interacts with 6K protein. Interacts with host LDLRAD3; this interaction mediates viral entry to the host cell. In terms of assembly, oligomer. Interacts with spike glycoprotein E1. Interacts with spike glycoprotein E2. Structural polyprotein: Specific enzymatic cleavages in vivo yield mature proteins. Capsid protein is auto-cleaved during polyprotein translation, unmasking a signal peptide at the N-terminus of the precursor of E3/E2. The remaining polyprotein is then targeted to the host endoplasmic reticulum, where host signal peptidase cleaves it into pE2, 6K and E1 proteins. pE2 is further processed to mature E3 and E2 by host furin in trans-Golgi vesicle. In terms of processing, phosphorylated on serine and threonine residues. Post-translationally, palmitoylated via thioester bonds. These palmitoylations may induce disruption of the C-terminus transmembrane. This would result in the reorientation of E2 C-terminus from lumenal to cytoplasmic side. N-glycosylated. In terms of processing, palmitoylated via thioester bonds.

The protein resides in the virion. It is found in the host cytoplasm. Its subcellular location is the host cell membrane. It localises to the host nucleus. The protein localises to the virion membrane. The protein resides in the host Golgi apparatus. It is found in the host trans-Golgi network. Its subcellular location is the host endoplasmic reticulum. The catalysed reaction is Autocatalytic release of the core protein from the N-terminus of the togavirus structural polyprotein by hydrolysis of a -Trp-|-Ser- bond.. In terms of biological role, forms an icosahedral capsid with a T=4 symmetry composed of 240 copies of the capsid protein surrounded by a lipid membrane through which penetrate 80 spikes composed of trimers of E1-E2 heterodimers. The capsid protein binds to the viral RNA genome at a site adjacent to a ribosome binding site for viral genome translation following genome release. Possesses a protease activity that results in its autocatalytic cleavage from the nascent structural protein. Following its self-cleavage, the capsid protein transiently associates with ribosomes, and within several minutes the protein binds to viral RNA and rapidly assembles into icosahedric core particles. The resulting nucleocapsid eventually associates with the cytoplasmic domain of the spike glycoprotein E2 at the cell membrane, leading to budding and formation of mature virions. In case of infection, new virions attach to target cells and after clathrin-mediated endocytosis their membrane fuses with the host endosomal membrane. This leads to the release of the nucleocapsid into the cytoplasm, followed by an uncoating event necessary for the genomic RNA to become accessible. The uncoating might be triggered by the interaction of capsid proteins with ribosomes. Binding of ribosomes would release the genomic RNA since the same region is genomic RNA-binding and ribosome-binding. Specifically inhibits interleukin-1 receptor-associated kinase 1/IRAK1-dependent signaling during viral entry, representing a means by which the alphaviruses may evade innate immune detection and activation prior to viral gene expression. Inhibits host transcription. Forms a tetrameric complex with XPO1/CRM1 and the nuclear import receptor importin. This complex blocks the central channel of host nuclear pores thereby inhibiting the receptor-mediated nuclear transport and thus the host mRNA and rRNA transcription. The inhibition of transcription is linked to a cytopathic effect on the host cell. Functionally, provides the signal sequence for the translocation of the precursor of protein E3/E2 to the host endoplasmic reticulum. Furin-cleaved E3 remains associated with spike glycoprotein E1 and mediates pH protection of the latter during the transport via the secretory pathway. After virion release from the host cell, the assembly protein E3 is gradually released in the extracellular space. Its function is as follows. Plays a role in viral attachment to target host cell, by binding to the cell receptor LDLRAD3. Synthesized as a p62 precursor which is processed by furin at the cell membrane just before virion budding, giving rise to E2-E1 heterodimer. The p62-E1 heterodimer is stable, whereas E2-E1 is unstable and dissociate at low pH. p62 is processed at the last step, presumably to avoid E1 fusion activation before its final export to cell surface. E2 C-terminus contains a transitory transmembrane that would be disrupted by palmitoylation, resulting in reorientation of the C-terminal tail from lumenal to cytoplasmic side. This step is critical since E2 C-terminus is involved in budding by interacting with capsid proteins. This release of E2 C-terminus in cytoplasm occurs lately in protein export, and precludes premature assembly of particles at the endoplasmic reticulum membrane. Acts as a viroporin that participates in virus glycoprotein processing and transport to the plasma membrane, cell permeabilization and budding of viral particles. Disrupts the calcium homeostasis of the cell, probably at the endoplasmic reticulum level. This leads to cytoplasmic calcium elevation. Because of its lipophilic properties, the 6K protein is postulated to influence the selection of lipids that interact with the transmembrane domains of the glycoproteins, which, in turn, affects the deformability of the bilayer required for the extreme curvature that occurs as budding proceeds. Present in low amount in virions, about 3% compared to viral glycoproteins. In terms of biological role, class II viral fusion protein. Fusion activity is inactive as long as E1 is bound to E2 in mature virion. After virus attachment to cell receptor LDLRAD3 and endocytosis, acidification of the endosome induce dissociation of E1/E2 heterodimer and concomitant trimerization of the E1 subunits. This E1 trimer is fusion active, and promotes release of viral nucleocapsid in cytoplasm after endosome and viral membrane fusion. Efficient fusion requires the presence of cholesterol and sphingolipid in the target membrane. This is Structural polyprotein from Venezuelan equine encephalitis virus (strain 3880) (VEEV).